Reading from the N-terminus, the 487-residue chain is ATP-dependent 6-phosphofructokinase (487 aa).

ATP-binding positions include G107, R173–G174, G198–T201, and K226. A Mg(2+)-binding site is contributed by D199. Substrate-binding positions include T227–D229, M272–R274, and E325. Catalysis depends on D229, which acts as the Proton acceptor. S341–N343 contacts ATP. Y380 to R383 serves as a coordination point for substrate. A Peroxisomal targeting signal motif is present at residues A485–L487.

It belongs to the phosphofructokinase type A (PFKA) family. PPi-dependent PFK group II subfamily. Atypical ATP-dependent clade 'X' sub-subfamily. Homotetramer. The cofactor is Mg(2+).

The protein localises to the glycosome. It carries out the reaction beta-D-fructose 6-phosphate + ATP = beta-D-fructose 1,6-bisphosphate + ADP + H(+). It participates in carbohydrate degradation; glycolysis; D-glyceraldehyde 3-phosphate and glycerone phosphate from D-glucose: step 3/4. Its activity is regulated as follows. Allosterically activated by AMP. Catalyzes the phosphorylation of D-fructose 6-phosphate to fructose 1,6-bisphosphate by ATP, the first committing step of glycolysis. This is ATP-dependent 6-phosphofructokinase from Trypanosoma brucei brucei.